The primary structure comprises 502 residues: ATP synthase subunit alpha (502 aa).

169-176 (GDRQVGKT) provides a ligand contact to ATP.

Belongs to the ATPase alpha/beta chains family. As to quaternary structure, F-type ATPases have 2 components, CF(1) - the catalytic core - and CF(0) - the membrane proton channel. CF(1) has five subunits: alpha(3), beta(3), gamma(1), delta(1), epsilon(1). CF(0) has three main subunits: a(1), b(2) and c(9-12). The alpha and beta chains form an alternating ring which encloses part of the gamma chain. CF(1) is attached to CF(0) by a central stalk formed by the gamma and epsilon chains, while a peripheral stalk is formed by the delta and b chains.

It is found in the cell membrane. It catalyses the reaction ATP + H2O + 4 H(+)(in) = ADP + phosphate + 5 H(+)(out). Functionally, produces ATP from ADP in the presence of a proton gradient across the membrane. The alpha chain is a regulatory subunit. This Lysinibacillus sphaericus (strain C3-41) protein is ATP synthase subunit alpha.